The primary structure comprises 604 residues: UvrABC system protein C (604 aa).

A GIY-YIG domain is found at 17 to 95 (AQPGVYRMLN…IKSLAPRYNI (79 aa)). The UVR domain occupies 204 to 239 (DEVLKTIEQKMFTASDQQDYEQAAQLRDQMQALRKI).

It belongs to the UvrC family. As to quaternary structure, interacts with UvrB in an incision complex.

The protein resides in the cytoplasm. The UvrABC repair system catalyzes the recognition and processing of DNA lesions. UvrC both incises the 5' and 3' sides of the lesion. The N-terminal half is responsible for the 3' incision and the C-terminal half is responsible for the 5' incision. This Nitrosomonas europaea (strain ATCC 19718 / CIP 103999 / KCTC 2705 / NBRC 14298) protein is UvrABC system protein C.